The sequence spans 173 residues: Ribulose bisphosphate carboxylase small subunit, chloroplastic 2 (173 aa).

The N-terminal 33 residues, 1-33, are a transit peptide targeting the chloroplast; the sequence is VVLSKECAKPLATPKVTLNKRGFATTIATKNRE.

Belongs to the RuBisCO small chain family. In terms of assembly, heterohexadecamer of 8 large and 8 small subunits.

It is found in the plastid. The protein localises to the chloroplast. Its function is as follows. RuBisCO catalyzes two reactions: the carboxylation of D-ribulose 1,5-bisphosphate, the primary event in carbon dioxide fixation, as well as the oxidative fragmentation of the pentose substrate. Both reactions occur simultaneously and in competition at the same active site. Although the small subunit is not catalytic it is essential for maximal activity. The sequence is that of Ribulose bisphosphate carboxylase small subunit, chloroplastic 2 from Acetabularia acetabulum (Mermaid's wine glass).